Here is a 600-residue protein sequence, read N- to C-terminus: UvrABC system protein C (600 aa).

Positions 16–94 (EKPGCYQYFD…IKEYQPRYNV (79 aa)) constitute a GIY-YIG domain. Residues 208–243 (HRLVRMYRDRMQAYSEELRFEEAQICKERIELLERY) form the UVR domain.

This sequence belongs to the UvrC family. As to quaternary structure, interacts with UvrB in an incision complex.

Its subcellular location is the cytoplasm. Functionally, the UvrABC repair system catalyzes the recognition and processing of DNA lesions. UvrC both incises the 5' and 3' sides of the lesion. The N-terminal half is responsible for the 3' incision and the C-terminal half is responsible for the 5' incision. The chain is UvrABC system protein C from Porphyromonas gingivalis (strain ATCC 33277 / DSM 20709 / CIP 103683 / JCM 12257 / NCTC 11834 / 2561).